We begin with the raw amino-acid sequence, 250 residues long: MTRYKAIISYDGSQFQGFQRQSHARSVQEEIEKTLTKLTNGKEIKVHGAGRTDSGVHAYGQVLHFDLDQDRDLEKLRFALDTQSPEDIDFISVEKVSDDFHSRYTKHLKTYEFIVDIGRPKNPMMRHYATHFPYPLDLDNIQLAIKDLIGTHDFTGFTASGATIENKVRTIIDASVRYEEDKNFLIFTFTGNGFLYKQVRNMVGTLLKIGNNRMPVDQIKTILEKKDRQLAGPTPAGNGLYLKEIIYEDK.

The active-site Nucleophile is the Asp53. Tyr111 provides a ligand contact to substrate.

The protein belongs to the tRNA pseudouridine synthase TruA family. As to quaternary structure, homodimer.

The enzyme catalyses uridine(38/39/40) in tRNA = pseudouridine(38/39/40) in tRNA. Its function is as follows. Formation of pseudouridine at positions 38, 39 and 40 in the anticodon stem and loop of transfer RNAs. In Streptococcus uberis (strain ATCC BAA-854 / 0140J), this protein is tRNA pseudouridine synthase A.